The chain runs to 472 residues: Hepatocyte nuclear factor 3-alpha (472 aa).

A DNA-binding region (fork-head) is located at residues 169-260 (AKPPYSYISL…GNMFENGCYL (92 aa)). The tract at residues 269–392 (EKQPGAGGGG…ESQLHLKGDP (124 aa)) is disordered. Residues 273–289 (GAGGGGGSGSGGSGAKG) are compositionally biased toward gly residues. A phosphoserine mark is found at S307 and S331. Composition is skewed to low complexity over residues 322–332 (GAPAPGPAASP) and 351–366 (TPAS…GPGA).

As to quaternary structure, binds DNA as a monomer. Interacts with FOXA2. Interacts with NKX2-1. Interacts with HDAC7. Interacts with the histone H3-H4 heterodimer. Associates with nucleosomes containing histone H2A. Interacts with AR. Interacts with NR0B2. In terms of tissue distribution, highly expressed in prostate and ESR1-positive breast tumors. Overexpressed in esophageal and lung adenocarcinomas.

The protein resides in the nucleus. Its function is as follows. Transcription factor that is involved in embryonic development, establishment of tissue-specific gene expression and regulation of gene expression in differentiated tissues. Is thought to act as a 'pioneer' factor opening the compacted chromatin for other proteins through interactions with nucleosomal core histones and thereby replacing linker histones at target enhancer and/or promoter sites. Binds DNA with the consensus sequence 5'-[AC]A[AT]T[AG]TT[GT][AG][CT]T[CT]-3'. Proposed to play a role in translating the epigenetic signatures into cell type-specific enhancer-driven transcriptional programs. Its differential recruitment to chromatin is dependent on distribution of histone H3 methylated at 'Lys-5' (H3K4me2) in estrogen-regulated genes. Involved in the development of multiple endoderm-derived organ systems such as liver, pancreas, lung and prostate; FOXA1 and FOXA2 seem to have at least in part redundant roles. Modulates the transcriptional activity of nuclear hormone receptors. Is involved in ESR1-mediated transcription; required for ESR1 binding to the NKX2-1 promoter in breast cancer cells; binds to the RPRM promoter and is required for the estrogen-induced repression of RPRM. Involved in regulation of apoptosis by inhibiting the expression of BCL2. Involved in cell cycle regulation by activating expression of CDKN1B, alone or in conjunction with BRCA1. Originally described as a transcription activator for a number of liver genes such as AFP, albumin, tyrosine aminotransferase, PEPCK, etc. Interacts with the cis-acting regulatory regions of these genes. Involved in glucose homeostasis. This is Hepatocyte nuclear factor 3-alpha (FOXA1) from Homo sapiens (Human).